Consider the following 425-residue polypeptide: Serine--tRNA ligase (425 aa).

Residue 233 to 235 coordinates L-serine; the sequence is TAE. 264–266 lines the ATP pocket; the sequence is RRE. E287 provides a ligand contact to L-serine. 351–354 provides a ligand contact to ATP; it reads EISS. S387 is an L-serine binding site.

It belongs to the class-II aminoacyl-tRNA synthetase family. Type-1 seryl-tRNA synthetase subfamily. In terms of assembly, homodimer. The tRNA molecule binds across the dimer.

The protein resides in the cytoplasm. The enzyme catalyses tRNA(Ser) + L-serine + ATP = L-seryl-tRNA(Ser) + AMP + diphosphate + H(+). It carries out the reaction tRNA(Sec) + L-serine + ATP = L-seryl-tRNA(Sec) + AMP + diphosphate + H(+). It functions in the pathway aminoacyl-tRNA biosynthesis; selenocysteinyl-tRNA(Sec) biosynthesis; L-seryl-tRNA(Sec) from L-serine and tRNA(Sec): step 1/1. Functionally, catalyzes the attachment of serine to tRNA(Ser). Is also able to aminoacylate tRNA(Sec) with serine, to form the misacylated tRNA L-seryl-tRNA(Sec), which will be further converted into selenocysteinyl-tRNA(Sec). The polypeptide is Serine--tRNA ligase (Thermotoga neapolitana (strain ATCC 49049 / DSM 4359 / NBRC 107923 / NS-E)).